The following is a 328-amino-acid chain: tRNA uridine(34) hydroxylase (328 aa).

The Rhodanese domain maps to 123–217; sequence SDPETVLIDT…YLEEVPKEKS (95 aa). C177 acts as the Cysteine persulfide intermediate in catalysis. Positions 304-328 are disordered; sequence AKKLAQLNKQKKQQAKEAARKKAQQ. Basic and acidic residues predominate over residues 317-328; it reads QAKEAARKKAQQ.

It belongs to the TrhO family.

It catalyses the reaction uridine(34) in tRNA + AH2 + O2 = 5-hydroxyuridine(34) in tRNA + A + H2O. Its function is as follows. Catalyzes oxygen-dependent 5-hydroxyuridine (ho5U) modification at position 34 in tRNAs. This Francisella tularensis subsp. holarctica (strain LVS) protein is tRNA uridine(34) hydroxylase.